The primary structure comprises 212 residues: Large ribosomal subunit protein bL25 (212 aa).

The interval 183-212 is disordered; that stretch reads HDLPVASIHKPKGAKADDAEGEEGEEGGEE. The span at 201 to 212 shows a compositional bias: acidic residues; sequence AEGEEGEEGGEE.

It belongs to the bacterial ribosomal protein bL25 family. CTC subfamily. As to quaternary structure, part of the 50S ribosomal subunit; part of the 5S rRNA/L5/L18/L25 subcomplex. Contacts the 5S rRNA. Binds to the 5S rRNA independently of L5 and L18.

Functionally, this is one of the proteins that binds to the 5S RNA in the ribosome where it forms part of the central protuberance. In Marinobacter nauticus (strain ATCC 700491 / DSM 11845 / VT8) (Marinobacter aquaeolei), this protein is Large ribosomal subunit protein bL25.